The following is a 261-amino-acid chain: tRNA pseudouridine synthase A (261 aa).

Asp-51 functions as the Nucleophile in the catalytic mechanism. Tyr-109 lines the substrate pocket.

Belongs to the tRNA pseudouridine synthase TruA family. In terms of assembly, homodimer.

It catalyses the reaction uridine(38/39/40) in tRNA = pseudouridine(38/39/40) in tRNA. In terms of biological role, formation of pseudouridine at positions 38, 39 and 40 in the anticodon stem and loop of transfer RNAs. This Shewanella denitrificans (strain OS217 / ATCC BAA-1090 / DSM 15013) protein is tRNA pseudouridine synthase A.